We begin with the raw amino-acid sequence, 301 residues long: Tetrapeptide repeat homeobox protein 2 (301 aa).

Disordered stretches follow at residues 1-27 (MQDP…RTVY) and 273-301 (SLST…LLDL). Composition is skewed to basic and acidic residues over residues 16–26 (PPRRQRQERTV) and 281–292 (YKEEDGFVDKNH). Residues 20–79 (QRQERTVYTESQQKVLEFYFQKDQYPNYDQRLNLAEMLSLREQQLQVWFKNRRAKLARER) constitute a DNA-binding region (homeobox).

This sequence belongs to the paired homeobox family.

Its subcellular location is the nucleus. Transcription factor expressed after fertilization required for zygotic genome activation (ZGA), a critical event in early embryonic development during which the developmental control passes from maternally provided mRNAs to the expression of the zygotic genome after fertilization. Binds and activates expression of key ZGA marker genes, such as NANOGNB, ZSCAN4, DUXB, KLF5 and DPPA3. Binds to regulatory DNA sequences containing a 5'-TAATCC-3' sequence motif. The polypeptide is Tetrapeptide repeat homeobox protein 2 (Homo sapiens (Human)).